We begin with the raw amino-acid sequence, 380 residues long: Queuine tRNA-ribosyltransferase (380 aa).

The Proton acceptor role is filled by Asp89. Residues 89–93, Asp143, Gln187, and Gly214 each bind substrate; that span reads DSGGF. An RNA binding region spans residues 245–251; the sequence is GVGKPED. The active-site Nucleophile is Asp264. Residues 269–273 form an RNA binding; important for wobble base 34 recognition region; sequence TRNAR. 4 residues coordinate Zn(2+): Cys302, Cys304, Cys307, and His333.

This sequence belongs to the queuine tRNA-ribosyltransferase family. In terms of assembly, homodimer. Within each dimer, one monomer is responsible for RNA recognition and catalysis, while the other monomer binds to the replacement base PreQ1. Zn(2+) serves as cofactor.

It catalyses the reaction 7-aminomethyl-7-carbaguanine + guanosine(34) in tRNA = 7-aminomethyl-7-carbaguanosine(34) in tRNA + guanine. It functions in the pathway tRNA modification; tRNA-queuosine biosynthesis. In terms of biological role, catalyzes the base-exchange of a guanine (G) residue with the queuine precursor 7-aminomethyl-7-deazaguanine (PreQ1) at position 34 (anticodon wobble position) in tRNAs with GU(N) anticodons (tRNA-Asp, -Asn, -His and -Tyr). Catalysis occurs through a double-displacement mechanism. The nucleophile active site attacks the C1' of nucleotide 34 to detach the guanine base from the RNA, forming a covalent enzyme-RNA intermediate. The proton acceptor active site deprotonates the incoming PreQ1, allowing a nucleophilic attack on the C1' of the ribose to form the product. After dissociation, two additional enzymatic reactions on the tRNA convert PreQ1 to queuine (Q), resulting in the hypermodified nucleoside queuosine (7-(((4,5-cis-dihydroxy-2-cyclopenten-1-yl)amino)methyl)-7-deazaguanosine). The sequence is that of Queuine tRNA-ribosyltransferase from Proteus mirabilis (strain HI4320).